Here is a 137-residue protein sequence, read N- to C-terminus: Large ribosomal subunit protein uL16 (137 aa).

This sequence belongs to the universal ribosomal protein uL16 family. Part of the 50S ribosomal subunit.

Binds 23S rRNA and is also seen to make contacts with the A and possibly P site tRNAs. The protein is Large ribosomal subunit protein uL16 of Leptospira biflexa serovar Patoc (strain Patoc 1 / Ames).